A 243-amino-acid chain; its full sequence is Outer membrane protein A (243 aa).

5 beta stranded membrane-spanning segments follow: residues 1–8 (LTAKLGYP), 13–21 (LDIYTRLGG), 48–57 (PVFAGGVEWA), 62–69 (IATRLEYQ), and 88–96 (LLSLGVSYR). 4 tandem repeats follow at residues 107-108 (AP), 109-110 (AP), 111-112 (AP), and 113-114 (AP). A 4 X 2 AA tandem repeats of A-P region spans residues 107-114 (APAPAPAP). In terms of domain architecture, OmpA-like spans 116 to 243 (VQTKHFTLKS…RRVEIEVKGI (128 aa)). Cysteine 217 and cysteine 229 are disulfide-bonded.

The protein belongs to the outer membrane OOP (TC 1.B.6) superfamily. OmpA family. In terms of assembly, monomer and homodimer.

It is found in the cell outer membrane. Its function is as follows. With TolR probably plays a role in maintaining the position of the peptidoglycan cell wall in the periplasm. Acts as a porin with low permeability that allows slow penetration of small solutes; an internal gate slows down solute passage. Functionally, required for conjugation with F-type plasmids; probably serves as the mating receptor on recipient cells. The protein is Outer membrane protein A of Escherichia fergusonii.